A 647-amino-acid polypeptide reads, in one-letter code: DNA mismatch repair protein MutL (647 aa).

This sequence belongs to the DNA mismatch repair MutL/HexB family.

In terms of biological role, this protein is involved in the repair of mismatches in DNA. It is required for dam-dependent methyl-directed DNA mismatch repair. May act as a 'molecular matchmaker', a protein that promotes the formation of a stable complex between two or more DNA-binding proteins in an ATP-dependent manner without itself being part of a final effector complex. This is DNA mismatch repair protein MutL from Bacillus thuringiensis subsp. konkukian (strain 97-27).